We begin with the raw amino-acid sequence, 89 residues long: Small ribosomal subunit protein uS14 (89 aa).

Belongs to the universal ribosomal protein uS14 family. In terms of assembly, part of the 30S ribosomal subunit. Contacts proteins S3 and S10.

Its function is as follows. Binds 16S rRNA, required for the assembly of 30S particles and may also be responsible for determining the conformation of the 16S rRNA at the A site. The polypeptide is Small ribosomal subunit protein uS14 (Phytoplasma australiense).